A 214-amino-acid polypeptide reads, in one-letter code: Ras-related protein RABA5c (214 aa).

Glycine 19–serine 26 is a GTP binding site. Residues serine 41–phenylalanine 49 carry the Effector region motif. GTP is bound by residues aspartate 67–glutamine 71, asparagine 125–aspartate 128, and serine 155–alanine 156. 2 S-geranylgeranyl cysteine lipidation sites follow: cysteine 211 and cysteine 212.

The protein belongs to the small GTPase superfamily. Rab family. In terms of assembly, interacts (via C-terminus) with GDI1. Interacts with PUX8/SAY1. Expressed in roots and actively dividing cells.

It is found in the golgi apparatus membrane. Its subcellular location is the golgi apparatus. It localises to the trans-Golgi network membrane. The protein resides in the cell membrane. Functionally, intracellular vesicle trafficking and protein transport. Binds GTP and GDP and possesses intrinsic GTPase activity. This is Ras-related protein RABA5c (RABA5C) from Arabidopsis thaliana (Mouse-ear cress).